Reading from the N-terminus, the 817-residue chain is Myosin-A (817 aa).

Serine 19 is subject to Phosphoserine. The 675-residue stretch at 97–771 (MSFGDIGLLN…GAKMLSKIQR (675 aa)) folds into the Myosin motor domain. 191–198 (GESGAGKT) serves as a coordination point for ATP. Positions 661-671 (PHFIRCIKPNE) are actin-binding. The segment at 773–817 (KLVEWENCVSVIEAAIMKYKHKQNVENNVSSLMRVQAHIRKRMVA) is tail.

The protein belongs to the TRAFAC class myosin-kinesin ATPase superfamily. Myosin family. As to quaternary structure, interacts with ACT1.

It localises to the cell membrane. In terms of biological role, myosins are actin-based motor molecules with ATPase activity. Unconventional myosins serve in intracellular movements. Their highly divergent tails are presumed to bind to membranous compartments, which would be moved relative to actin filaments. The sequence is that of Myosin-A from Plasmodium yoelii yoelii.